Reading from the N-terminus, the 300-residue chain is Histone deacetylase HDT3 (300 aa).

The segment covering 98 to 112 (EDEMDLDSEDEDEEL) has biased composition (acidic residues). The segment at 98–300 (EDEMDLDSED…AHSKAKHGGK (203 aa)) is disordered. Residues 119 to 132 (ENGKADEKKQKSQE) are compositionally biased toward basic and acidic residues. The span at 151-197 (DDDSDEDETDDSDEDETDDSDEGLSPEEGDDDSSDEDDTSDDEEEDT) shows a compositional bias: acidic residues. Residues 198–211 (PTPKKPEVGKKRAA) show a composition bias toward basic and acidic residues. A compositionally biased stretch (low complexity) spans 265–275 (SPKSAPKSGVP). The C2H2-type zinc-finger motif lies at 274–297 (VPCKSCSKSFISETAPQAHSKAKH). Residues 279–290 (CSKSFISETAPQ) are compositionally biased toward polar residues.

It belongs to the histone deacetylase HD2 family. As to quaternary structure, multimer. Possibly forms a homotrimer with HDT1 and/or HDT2.

The protein resides in the nucleus. The protein localises to the nucleolus. Mediates the deacetylation of lysine residues on the N-terminal part of the core histones (H2A, H2B, H3 and H4). Histone deacetylation gives a tag for epigenetic repression and plays an important role in transcriptional regulation, cell cycle progression and developmental events. This is Histone deacetylase HDT3 (HDT3) from Zea mays (Maize).